Consider the following 217-residue polypeptide: Ribulose-phosphate 3-epimerase (217 aa).

A substrate-binding site is contributed by Ser-6. Positions 29, 31, and 62 each coordinate a divalent metal cation. The Proton acceptor role is filled by Asp-31. Residues His-62, 138-141 (GFGG), 171-173 (DGG), and 193-194 (GS) each bind substrate. Asp-171 contacts a divalent metal cation. The active-site Proton donor is Asp-171.

This sequence belongs to the ribulose-phosphate 3-epimerase family. A divalent metal cation is required as a cofactor.

The enzyme catalyses D-ribulose 5-phosphate = D-xylulose 5-phosphate. It participates in carbohydrate degradation. Catalyzes the reversible epimerization of D-ribulose 5-phosphate to D-xylulose 5-phosphate. The protein is Ribulose-phosphate 3-epimerase of Helicobacter pylori (strain ATCC 700392 / 26695) (Campylobacter pylori).